The primary structure comprises 387 residues: Enoyl-[acyl-carrier-protein] reductase 2, mitochondrial (387 aa).

The transit peptide at 1 to 23 (MYRNQLARASLRSTSSINQIRNM) directs the protein to the mitochondrion. Residue tyrosine 79 is the Proton donor of the active site. NADP(+)-binding positions include asparagine 172, 199 to 202 (NSAV), 222 to 224 (RDR), 297 to 300 (YGGM), 322 to 324 (FWV), and lysine 382.

It belongs to the zinc-containing alcohol dehydrogenase family. Quinone oxidoreductase subfamily. In terms of assembly, homodimer.

The protein localises to the mitochondrion matrix. It catalyses the reaction a 2,3-saturated acyl-[ACP] + NADP(+) = a (2E)-enoyl-[ACP] + NADPH + H(+). Its function is as follows. Catalyzes the NADPH-dependent reduction of trans-2-enoyl thioesters in mitochondrial fatty acid synthesis (fatty acid synthesis type II). Fatty acid chain elongation in mitochondria uses acyl carrier protein (ACP) as an acyl group carrier, but the enzyme accepts both ACP and CoA thioesters as substrates in vitro. Required for respiration and the maintenance of the mitochondrial compartment. This is Enoyl-[acyl-carrier-protein] reductase 2, mitochondrial (ETR2) from Debaryomyces hansenii (strain ATCC 36239 / CBS 767 / BCRC 21394 / JCM 1990 / NBRC 0083 / IGC 2968) (Yeast).